Reading from the N-terminus, the 261-residue chain is Cytochrome c oxidase subunit 3 (261 aa).

The Mitochondrial matrix segment spans residues 1 to 15; it reads MTHQTHSYHMVNPSP. Residues 16 to 34 form a helical membrane-spanning segment; sequence WPLTGALSALLMTSGLIMW. The Mitochondrial intermembrane segment spans residues 35 to 40; the sequence is FHFNSM. A helical membrane pass occupies residues 41–66; the sequence is ILLTLGLSTNILTMYQWWRDIIREST. The Mitochondrial matrix portion of the chain corresponds to 67–72; the sequence is FQGHHT. The chain crosses the membrane as a helical span at residues 73–105; it reads PTVQKGLRYGMILFIVSEVLFFTGFFWAFYHSS. Topologically, residues 106 to 128 are mitochondrial intermembrane; the sequence is LAPTPELGGCWPPTGIHPLNPLE. Residues 129–152 traverse the membrane as a helical segment; that stretch reads VPLLNTSVLLASGVSITWAHHSLM. Topologically, residues 153–155 are mitochondrial matrix; that stretch reads EGN. A helical transmembrane segment spans residues 156-183; that stretch reads RKHMLQALFITIALGLYFTLLQASEYYE. The Mitochondrial intermembrane segment spans residues 184–190; sequence APFTISD. A helical membrane pass occupies residues 191-223; that stretch reads GIYGSTFFVATGFHGLHVIIGSTFLIVCFLRQV. Over 224–232 the chain is Mitochondrial matrix; it reads KFHFTSNHH. The helical transmembrane segment at 233–256 threads the bilayer; the sequence is FGFERAAWYWHFVDVVWLFLYVSI. Over 257-261 the chain is Mitochondrial intermembrane; the sequence is YWWGS.

It belongs to the cytochrome c oxidase subunit 3 family. In terms of assembly, component of the cytochrome c oxidase (complex IV, CIV), a multisubunit enzyme composed of 14 subunits. The complex is composed of a catalytic core of 3 subunits MT-CO1, MT-CO2 and MT-CO3, encoded in the mitochondrial DNA, and 11 supernumerary subunits COX4I, COX5A, COX5B, COX6A, COX6B, COX6C, COX7A, COX7B, COX7C, COX8 and NDUFA4, which are encoded in the nuclear genome. The complex exists as a monomer or a dimer and forms supercomplexes (SCs) in the inner mitochondrial membrane with NADH-ubiquinone oxidoreductase (complex I, CI) and ubiquinol-cytochrome c oxidoreductase (cytochrome b-c1 complex, complex III, CIII), resulting in different assemblies (supercomplex SCI(1)III(2)IV(1) and megacomplex MCI(2)III(2)IV(2)).

The protein resides in the mitochondrion inner membrane. The catalysed reaction is 4 Fe(II)-[cytochrome c] + O2 + 8 H(+)(in) = 4 Fe(III)-[cytochrome c] + 2 H2O + 4 H(+)(out). Component of the cytochrome c oxidase, the last enzyme in the mitochondrial electron transport chain which drives oxidative phosphorylation. The respiratory chain contains 3 multisubunit complexes succinate dehydrogenase (complex II, CII), ubiquinol-cytochrome c oxidoreductase (cytochrome b-c1 complex, complex III, CIII) and cytochrome c oxidase (complex IV, CIV), that cooperate to transfer electrons derived from NADH and succinate to molecular oxygen, creating an electrochemical gradient over the inner membrane that drives transmembrane transport and the ATP synthase. Cytochrome c oxidase is the component of the respiratory chain that catalyzes the reduction of oxygen to water. Electrons originating from reduced cytochrome c in the intermembrane space (IMS) are transferred via the dinuclear copper A center (CU(A)) of subunit 2 and heme A of subunit 1 to the active site in subunit 1, a binuclear center (BNC) formed by heme A3 and copper B (CU(B)). The BNC reduces molecular oxygen to 2 water molecules using 4 electrons from cytochrome c in the IMS and 4 protons from the mitochondrial matrix. This chain is Cytochrome c oxidase subunit 3 (MT-CO3), found in Balaenoptera musculus (Blue whale).